A 358-amino-acid polypeptide reads, in one-letter code: Peptide chain release factor 1 (358 aa).

Gln233 carries the post-translational modification N5-methylglutamine.

It belongs to the prokaryotic/mitochondrial release factor family. In terms of processing, methylated by PrmC. Methylation increases the termination efficiency of RF1.

The protein resides in the cytoplasm. In terms of biological role, peptide chain release factor 1 directs the termination of translation in response to the peptide chain termination codons UAG and UAA. The chain is Peptide chain release factor 1 from Geobacillus kaustophilus (strain HTA426).